The chain runs to 353 residues: Uroporphyrinogen decarboxylase (353 aa).

Residues 28–32 (RQAGR), aspartate 78, tyrosine 155, serine 210, and histidine 325 each bind substrate.

The protein belongs to the uroporphyrinogen decarboxylase family. As to quaternary structure, homodimer.

It is found in the cytoplasm. The enzyme catalyses uroporphyrinogen III + 4 H(+) = coproporphyrinogen III + 4 CO2. Its pathway is porphyrin-containing compound metabolism; protoporphyrin-IX biosynthesis; coproporphyrinogen-III from 5-aminolevulinate: step 4/4. In terms of biological role, catalyzes the decarboxylation of four acetate groups of uroporphyrinogen-III to yield coproporphyrinogen-III. In Nostoc punctiforme (strain ATCC 29133 / PCC 73102), this protein is Uroporphyrinogen decarboxylase.